Here is a 339-residue protein sequence, read N- to C-terminus: Homeobox protein Hox-D13 (339 aa).

The segment at 1–33 (MSRSGTWDMDGLRADGGAAGAAPASSSSSVAAP) is disordered. A compositionally biased stretch (low complexity) spans 20–33 (GAAPASSSSSVAAP). Positions 272-331 (GRKKRVPYTKLQLKELENEYAINKFINKDKRRRISAATNLSERQVTIWFQNRRVKDKKIV) form a DNA-binding region, homeobox.

The protein belongs to the Abd-B homeobox family.

The protein resides in the nucleus. Its function is as follows. Sequence-specific transcription factor that binds gene promoters and activates their transcription. Part of a developmental regulatory system that provides cells with specific positional identities on the anterior-posterior axis. The sequence is that of Homeobox protein Hox-D13 (Hoxd13) from Mus musculus (Mouse).